The chain runs to 793 residues: DnaJ homolog subfamily C member 10 (793 aa).

The N-terminal stretch at Met-1–Thr-32 is a signal peptide. The J domain occupies Asp-35–Gly-100. The Thioredoxin 1 domain maps to Glu-130–His-232. A disulfide bond links Cys-158 and Cys-161. Trxb regions lie at residues Ser-235 to Phe-350 and Pro-348 to Phe-463. 3 consecutive Thioredoxin domains span residues His-454–Leu-553, Ser-557–Ile-662, and Val-671–Lys-778. A disulfide bond links Cys-480 and Cys-483. A glycan (N-linked (GlcNAc...) asparagine) is linked at Asn-530. 2 disulfides stabilise this stretch: Cys-588-Cys-591 and Cys-700-Cys-703. The Prevents secretion from ER motif lies at Lys-790 to Leu-793.

As to quaternary structure, interacts with EDEM1. Interacts with HSPA5 (via its J domain).

It is found in the endoplasmic reticulum lumen. Functionally, endoplasmic reticulum disulfide reductase involved both in the correct folding of proteins and degradation of misfolded proteins. Required for efficient folding of proteins in the endoplasmic reticulum by catalyzing the removal of non-native disulfide bonds formed during the folding of proteins, such as LDLR. Also involved in endoplasmic reticulum-associated degradation (ERAD) by reducing incorrect disulfide bonds in misfolded glycoproteins recognized by EDEM1. Interaction with HSPA5 is required its activity, not for the disulfide reductase activity, but to facilitate the release of DNAJC10 from its substrate. Promotes apoptotic signaling pathway in response to endoplasmic reticulum stress. This is DnaJ homolog subfamily C member 10 (DNAJC10) from Homo sapiens (Human).